A 320-amino-acid polypeptide reads, in one-letter code: Probable cell division protein WhiA (320 aa).

A DNA-binding region (H-T-H motif) is located at residues 276 to 310 (TLKELGEMVAGGKISKSGINHRLRKIDEIAERLRA).

This sequence belongs to the WhiA family.

In terms of biological role, involved in cell division and chromosome segregation. In Geobacillus thermodenitrificans (strain NG80-2), this protein is Probable cell division protein WhiA.